A 946-amino-acid polypeptide reads, in one-letter code: Bifunctional glutamine synthetase adenylyltransferase/adenylyl-removing enzyme (946 aa).

Positions 1 to 440 (MKPLSSPLQQ…VFNELIGDDE (440 aa)) are adenylyl removase. Residues 449–946 (SEQWRELWQD…ASWQKWLVEE (498 aa)) form an adenylyl transferase region.

Belongs to the GlnE family. Mg(2+) is required as a cofactor.

The enzyme catalyses [glutamine synthetase]-O(4)-(5'-adenylyl)-L-tyrosine + phosphate = [glutamine synthetase]-L-tyrosine + ADP. It carries out the reaction [glutamine synthetase]-L-tyrosine + ATP = [glutamine synthetase]-O(4)-(5'-adenylyl)-L-tyrosine + diphosphate. Involved in the regulation of glutamine synthetase GlnA, a key enzyme in the process to assimilate ammonia. When cellular nitrogen levels are high, the C-terminal adenylyl transferase (AT) inactivates GlnA by covalent transfer of an adenylyl group from ATP to specific tyrosine residue of GlnA, thus reducing its activity. Conversely, when nitrogen levels are low, the N-terminal adenylyl removase (AR) activates GlnA by removing the adenylyl group by phosphorolysis, increasing its activity. The regulatory region of GlnE binds the signal transduction protein PII (GlnB) which indicates the nitrogen status of the cell. The chain is Bifunctional glutamine synthetase adenylyltransferase/adenylyl-removing enzyme from Escherichia coli O45:K1 (strain S88 / ExPEC).